Reading from the N-terminus, the 111-residue chain is MQRERTAESSLRVISKEKNSITVEMINYDNTLLRTLVEEILKDDQVDEARYYIKHPVIDNPQIYVRVKSGKPQSAIKRAVRKLSKLYEDLGTQFQKEFQRYESDHMIKAVE.

It belongs to the archaeal Rpo11/eukaryotic RPB11/RPC19 RNA polymerase subunit family. As to quaternary structure, part of the RNA polymerase complex.

The protein resides in the cytoplasm. The catalysed reaction is RNA(n) + a ribonucleoside 5'-triphosphate = RNA(n+1) + diphosphate. Functionally, DNA-dependent RNA polymerase (RNAP) catalyzes the transcription of DNA into RNA using the four ribonucleoside triphosphates as substrates. The sequence is that of DNA-directed RNA polymerase subunit Rpo11 from Thermoplasma acidophilum (strain ATCC 25905 / DSM 1728 / JCM 9062 / NBRC 15155 / AMRC-C165).